Reading from the N-terminus, the 306-residue chain is MSELIPLSEVGVVNPTSATTNRPRRPEWLKARAPGGVNYHDVLRLMREKNLHTVCEEARCPNIGECWNHRTATFLLLGDICTRGCRYCAIGKGKPKPIDEEEPERVAESVAHLRLKFAVLTSVNRDDVPDGGAHIFARTIELIRQKVPDCKVEVLIPDFDGNWDALAMVLDAEPDVLNHNIETVPRLFRRFRPRAKFEQSIELLARARAAHPHLVTKSGMMVGAGETNEEVYEVIDRLREVDVNVLTIGQYLAPDASYWPVHRYVTPAEFADFRAYALARGFRHVESGPLVRSSYNAHLHVGAAQH.

Cysteine 55, cysteine 60, cysteine 66, cysteine 81, cysteine 85, cysteine 88, and serine 294 together coordinate [4Fe-4S] cluster. The Radical SAM core domain maps to 67–283; the sequence is WNHRTATFLL…RAYALARGFR (217 aa).

The protein belongs to the radical SAM superfamily. Lipoyl synthase family. The cofactor is [4Fe-4S] cluster.

Its subcellular location is the cytoplasm. It carries out the reaction [[Fe-S] cluster scaffold protein carrying a second [4Fe-4S](2+) cluster] + N(6)-octanoyl-L-lysyl-[protein] + 2 oxidized [2Fe-2S]-[ferredoxin] + 2 S-adenosyl-L-methionine + 4 H(+) = [[Fe-S] cluster scaffold protein] + N(6)-[(R)-dihydrolipoyl]-L-lysyl-[protein] + 4 Fe(3+) + 2 hydrogen sulfide + 2 5'-deoxyadenosine + 2 L-methionine + 2 reduced [2Fe-2S]-[ferredoxin]. Its pathway is protein modification; protein lipoylation via endogenous pathway; protein N(6)-(lipoyl)lysine from octanoyl-[acyl-carrier-protein]: step 2/2. Catalyzes the radical-mediated insertion of two sulfur atoms into the C-6 and C-8 positions of the octanoyl moiety bound to the lipoyl domains of lipoate-dependent enzymes, thereby converting the octanoylated domains into lipoylated derivatives. This chain is Lipoyl synthase, found in Chloroflexus aggregans (strain MD-66 / DSM 9485).